A 634-amino-acid polypeptide reads, in one-letter code: Threonine--tRNA ligase (634 aa).

A TGS domain is found at 1-61; sequence MISLKFPNNE…SESGEFRLYT (61 aa). Residues 242-532 are catalytic; that stretch reads DHRKIGQELD…LIEHYAGAFP (291 aa). Residues Cys333, His384, and His509 each coordinate Zn(2+).

It belongs to the class-II aminoacyl-tRNA synthetase family. Homodimer. Zn(2+) serves as cofactor.

It localises to the cytoplasm. It catalyses the reaction tRNA(Thr) + L-threonine + ATP = L-threonyl-tRNA(Thr) + AMP + diphosphate + H(+). Catalyzes the attachment of threonine to tRNA(Thr) in a two-step reaction: L-threonine is first activated by ATP to form Thr-AMP and then transferred to the acceptor end of tRNA(Thr). Also edits incorrectly charged L-seryl-tRNA(Thr). This chain is Threonine--tRNA ligase, found in Carboxydothermus hydrogenoformans (strain ATCC BAA-161 / DSM 6008 / Z-2901).